Here is a 413-residue protein sequence, read N- to C-terminus: ORC1-type DNA replication protein 10 (413 aa).

ATP contacts are provided by residues 63–67, tyrosine 211, and arginine 223; that span reads VGKTA.

Belongs to the CDC6/cdc18 family.

Involved in regulation of DNA replication. This is ORC1-type DNA replication protein 10 (orc10) from Halobacterium salinarum (strain ATCC 700922 / JCM 11081 / NRC-1) (Halobacterium halobium).